A 737-amino-acid polypeptide reads, in one-letter code: MGTKFPKASQALAQDPTTRRIWYGIATANDFETNDGITEENLYQKIFASHFGHLAIIFLWTSGNLFHVAWQGNFEQWVKDPLNTRPIAHAISDPHFGQRAIEAFSQAGASSPVNISYSGVYQWWYTQGMRTNEELYNGAIFLLILSALSLFAGWLHLQPKFRPNLSWFKNAESRLNHHLGGLFGTSSLAWTGHIVHVAIPESRGQHVGWDNFLQVAPHPAGLQPFFTGNWGVYTENPDTANHVFGSSDGAGTAILTFLGGFHPQTQSLWLTDIAHHHLAIAVLFIVAGHMYRTNFGIGHSIKEILNGHRPPGGRLGAGHVGLYDTVNNSLHFQLGLALAALGVITSLVAQHMYSIPPYAYLARDFTTQAALYTHHQYIAGFLMVGAFAHGAIFLVRDYDAEQNKNNVLARIIDHKEAIISHLSWVSLFLGFHTLGLYVHNDVVQAFGTPEKQILIEPVFAQWIQSVHGKSLYGFEVLLNNADSITRVAPGSAQPIWLPGWLDAINSGNNSLFLTIGPGDFLVHHAIALGLHTTTLILVKGALDARGSKLMPDKKDFGYSFPCDGPGRGGTCDISAWDAFYLAVFWMLNTIGWTTFYWHWKHLGVWQGNVAQFNESSTYLMGWFRDYLWLNSSQLINGYNPFGMNNLSVWAWMFLFGHLIWATGFMFLISWRGYWQELIETLVWAHERTPLANLVRWKDKPVALSIVQARLVGLAHFAVGYIVTYAAFLIASTASKFG.

A run of 8 helical transmembrane segments spans residues 46 to 69 (IFAS…FHVA), 135 to 158 (LYNG…LHLQ), 175 to 199 (LNHH…HVAI), 273 to 291 (IAHH…GHMY), 330 to 353 (LHFQ…QHMY), 369 to 395 (AALY…IFLV), 417 to 439 (AIIS…LYVH), and 520 to 538 (FLVH…LILV). Cys-562 and Cys-571 together coordinate [4Fe-4S] cluster. Helical transmembrane passes span 578–599 (AFYL…YWHW) and 646–668 (LSVW…MFLI). Residues His-657, Met-665, and Tyr-673 each coordinate chlorophyll a. Trp-674 is a phylloquinone binding site. The helical transmembrane segment at 710–730 (LVGLAHFAVGYIVTYAAFLIA) threads the bilayer.

The protein belongs to the PsaA/PsaB family. As to quaternary structure, the PsaA/B heterodimer binds the P700 chlorophyll special pair and subsequent electron acceptors. PSI consists of a core antenna complex that captures photons, and an electron transfer chain that converts photonic excitation into a charge separation. The eukaryotic PSI reaction center is composed of at least 11 subunits. P700 is a chlorophyll a/chlorophyll a' dimer, A0 is one or more chlorophyll a, A1 is one or both phylloquinones and FX is a shared 4Fe-4S iron-sulfur center. serves as cofactor.

Its subcellular location is the plastid. It localises to the cyanelle thylakoid membrane. It catalyses the reaction reduced [plastocyanin] + hnu + oxidized [2Fe-2S]-[ferredoxin] = oxidized [plastocyanin] + reduced [2Fe-2S]-[ferredoxin]. Its function is as follows. PsaA and PsaB bind P700, the primary electron donor of photosystem I (PSI), as well as the electron acceptors A0, A1 and FX. PSI is a cytochrome c6-ferredoxin oxidoreductase, converting photonic excitation into a charge separation, which transfers an electron from the donor P700 chlorophyll pair to the spectroscopically characterized acceptors A0, A1, FX, FA and FB in turn. Oxidized P700 is reduced on the lumenal side of the thylakoid membrane by cytochrome c6. This is Photosystem I P700 chlorophyll a apoprotein A2 from Cyanophora paradoxa.